Here is a 681-residue protein sequence, read N- to C-terminus: DNA ligase (681 aa).

NAD(+)-binding positions include 32–36, 81–82, and Glu-113; these read DIEYD and SL. Lys-115 functions as the N6-AMP-lysine intermediate in the catalytic mechanism. 4 residues coordinate NAD(+): Arg-136, Glu-173, Lys-290, and Lys-314. Positions 408, 411, 426, and 432 each coordinate Zn(2+). The region spanning 596–681 is the BRCT domain; sequence EIDSPFAGKT…LNNHGDVSTL (86 aa).

The protein belongs to the NAD-dependent DNA ligase family. LigA subfamily. Requires Mg(2+) as cofactor. The cofactor is Mn(2+).

It catalyses the reaction NAD(+) + (deoxyribonucleotide)n-3'-hydroxyl + 5'-phospho-(deoxyribonucleotide)m = (deoxyribonucleotide)n+m + AMP + beta-nicotinamide D-nucleotide.. Functionally, DNA ligase that catalyzes the formation of phosphodiester linkages between 5'-phosphoryl and 3'-hydroxyl groups in double-stranded DNA using NAD as a coenzyme and as the energy source for the reaction. It is essential for DNA replication and repair of damaged DNA. The polypeptide is DNA ligase (Pectobacterium atrosepticum (strain SCRI 1043 / ATCC BAA-672) (Erwinia carotovora subsp. atroseptica)).